The chain runs to 255 residues: U2 small nuclear ribonucleoprotein A' (255 aa).

LRR repeat units follow at residues 20–41 (RDRE…GATL), 43–64 (QFDA…PLLR), 65–86 (RLKT…LDQA), and 89–110 (CLTE…DPLA). Residues 123 to 161 (NPVTNKKHYRLYVIYKVPQVRVLDFQKVKLKERQEAEKM) form the LRRCT domain. Residue K172 is modified to N6-acetyllysine; alternate. A Glycyl lysine isopeptide (Lys-Gly) (interchain with G-Cter in SUMO2); alternate cross-link involves residue K172. The interval 174 to 201 (IARRSKTFNPGAGLPTDKKKGGPSPGDV) is disordered. Phosphoserine occurs at positions 178 and 197. K221 is covalently cross-linked (Glycyl lysine isopeptide (Lys-Gly) (interchain with G-Cter in SUMO2)). Positions 222–255 (GLLQSGQIPGRERRSGPTDDGEEEMEEDTVTNGS) are disordered. S236 and S255 each carry phosphoserine. The segment covering 240–255 (DDGEEEMEEDTVTNGS) has biased composition (acidic residues).

This sequence belongs to the U2 small nuclear ribonucleoprotein A family. As to quaternary structure, identified in the spliceosome B complex. Identified in the spliceosome C complex. Found in a pre-mRNA splicing complex with SFRS4, SFRS5, SNRNP70, SNRPA1, SRRM1 and SRRM2. Found in a pre-mRNA exonic splicing enhancer (ESE) complex with SNRNP70, SNRPA1, SRRM1 and TRA2B. Contributes to the binding of stem loop IV of U2 snRNA with SNRPB2.

Its subcellular location is the nucleus. Functionally, involved in pre-mRNA splicing as component of the spliceosome. Associated with sn-RNP U2, where it contributes to the binding of stem loop IV of U2 snRNA. The protein is U2 small nuclear ribonucleoprotein A' (SNRPA1) of Homo sapiens (Human).